Reading from the N-terminus, the 639-residue chain is Pheromone B alpha 1 receptor (639 aa).

Transmembrane regions (helical) follow at residues 8 to 28, 37 to 57, 70 to 90, 113 to 133, 163 to 183, 209 to 229, and 272 to 292; these read LFPIFAFLGFVLAILPLPWHL, FFMMWTALGCLNQFINSVAWA, ISIRILMGASVGIPASSLCII, ILVDALICVLFPLVYIALQYI, VWPVLLGLISATYGVMALLQF, MALALTEMMCTMPLGIFVIVL, and LTRWCAPVSAFIFFFYFGFAE. Disordered stretches follow at residues 375-416, 490-516, 532-563, and 611-639; these read PRPM…SSPI, TVPHHSTADEPASPALPDTPSSCSSSA, SADVTRRDSGSSAGGVASTSRPTRAGPPRLPS, and TTAGAPATTTPDRGEPDVPTSPRTHRASV. The span at 383–398 shows a compositional bias: low complexity; that stretch reads SSSGFSSSDSTRFGSS. Composition is skewed to low complexity over residues 541-551 and 611-621; these read GSSAGGVASTS and TTAGAPATTTP.

The protein belongs to the G-protein coupled receptor 4 family.

The protein localises to the membrane. Receptor for the BAP1 pheromone, a prenylated mating factor. Has a role in the initiation of B-regulated nuclear migration. This chain is Pheromone B alpha 1 receptor (BAR1), found in Schizophyllum commune (Split gill fungus).